The primary structure comprises 616 residues: General alpha-glucoside permease (616 aa).

Over 1 to 115 (MKNIISLVSK…AALWSILVST (115 aa)) the chain is Cytoplasmic. The segment covering 15–27 (SKNEDKNISESSR) has biased composition (basic and acidic residues). The disordered stretch occupies residues 15-40 (SKNEDKNISESSRDIVNQQEVFNTED). A helical membrane pass occupies residues 116–136 (TLVMEGYDTALLSALYALPVF). The Extracellular portion of the chain corresponds to 137–160 (QRKFGTLNGEGSYEITSQWQIGLN). Residues 161–181 (MCVLCGEMIGLQITTYMVEFM) form a helical membrane-spanning segment. The Cytoplasmic portion of the chain corresponds to 182-191 (GNRYTMITAL). The chain crosses the membrane as a helical span at residues 192 to 212 (GLLTAYIFILYYCKSLAMIAV). The Extracellular portion of the chain corresponds to 213–214 (GQ). The helical transmembrane segment at 215–235 (ILSAIPWGCFQSLAVTYASEV) threads the bilayer. Residues 236 to 242 (CPLALRY) are Cytoplasmic-facing. The helical transmembrane segment at 243 to 263 (YMTSYSNICWLFGQIFASGIM) threads the bilayer. Topologically, residues 264–278 (KNSQENLGNSDLGYK) are extracellular. The helical transmembrane segment at 279–299 (LPFALQWIWPAPLMIGIFFAP) threads the bilayer. Over 300–373 (ESPWWLVRKD…VNGRRTRLAC (74 aa)) the chain is Cytoplasmic. Residues 374–394 (LTWVAQNSSGAVLLGYSTYFF) traverse the membrane as a helical segment. Residues 395–404 (ERAGMATDKA) are Extracellular-facing. A helical transmembrane segment spans residues 405 to 425 (FTFSLIQYCLGLAGTLCSWVI). Over 426–433 (SGRVGRWT) the chain is Cytoplasmic. A helical membrane pass occupies residues 434–454 (ILTYGLAFQMVCLFIIGGMGF). Topologically, residues 455–466 (GSGSSASNGAGG) are extracellular. The helical transmembrane segment at 467–487 (LLLALSFFYNAGIGAVVYCIV) threads the bilayer. Topologically, residues 488–504 (AEIPSAELRTKTIVLAR) are cytoplasmic. Residues 505-525 (ICYNLMAVINAILTPYMLNVS) traverse the membrane as a helical segment. The Extracellular segment spans residues 526–532 (DWNWGAK). A helical membrane pass occupies residues 533–553 (TGLYWGGFTAVTLAWVIIDLP). Residues 554 to 616 (ETTGRTFSEI…QRELNAADKC (63 aa)) lie on the Cytoplasmic side of the membrane. The interval 587 to 616 (GKTQHDSLADESISQSSSIKQRELNAADKC) is disordered. The span at 606–616 (KQRELNAADKC) shows a compositional bias: basic and acidic residues.

Belongs to the major facilitator superfamily. Sugar transporter (TC 2.A.1.1) family.

It localises to the cell membrane. High-affinity uptake of alpha-glucosides such as maltose, turanose, isomaltose, alpha-methylglucoside, maltotriose, palatinose, trehalose, melezitose and glucose. Acts with the concomitant transport of protons into the cell (symport system). Provides an alternative and minor mechanism for growth on trehalose carbon source by transporting trehalose into the cytoplasm for conversion to glucose by neutral trehalase NTH1. This is General alpha-glucoside permease from Saccharomyces cerevisiae (strain CEN.PK113-7D) (Baker's yeast).